We begin with the raw amino-acid sequence, 89 residues long: Small ribosomal subunit protein uS17 (89 aa).

Belongs to the universal ribosomal protein uS17 family. As to quaternary structure, part of the 30S ribosomal subunit.

Functionally, one of the primary rRNA binding proteins, it binds specifically to the 5'-end of 16S ribosomal RNA. The protein is Small ribosomal subunit protein uS17 of Xylella fastidiosa (strain 9a5c).